The primary structure comprises 489 residues: Tyrosine-protein phosphatase MSG5 (489 aa).

Over residues M1–F18 the composition is skewed to basic and acidic residues. Residues M1–N30 are disordered. Residues S22, S98, and S151 each carry the phosphoserine modification. Position 178 is a phosphothreonine (T178). The Tyrosine-protein phosphatase domain occupies G233 to K375. The active-site Phosphocysteine intermediate is C319. 2 disordered regions span residues K375–T401 and L419–P489. Low complexity predominate over residues L419–T450. Over residues E451–K460 the composition is skewed to basic and acidic residues.

It belongs to the protein-tyrosine phosphatase family. Non-receptor class dual specificity subfamily.

It catalyses the reaction O-phospho-L-tyrosyl-[protein] + H2O = L-tyrosyl-[protein] + phosphate. Its function is as follows. Dual specificity phosphatase that dephosphorylates MAP kinase FUS3 on both a Tyr and a Ser or Thr. Has a role in adaptation to pheromone. This chain is Tyrosine-protein phosphatase MSG5 (MSG5), found in Saccharomyces cerevisiae (strain ATCC 204508 / S288c) (Baker's yeast).